The primary structure comprises 1117 residues: Reverse gyrase (1117 aa).

The segment at 3–42 (LATGAKYYHSCINCGGINTDTRNEKGLPCEVCLPFEDGDV) adopts an RG N-terminal-type zinc-finger fold. The Zn(2+) site is built by Cys-13, Cys-16, Cys-31, and Cys-34. ATP-binding positions include Gln-84 and 101-108 (APTGVGKT). A Helicase ATP-binding domain is found at 88–284 (AKRLLLSKSF…LFRELLGFEI (197 aa)). Positions 206-209 (DDVD) match the DEAD box motif. A topoisomerase I region spans residues 551 to 1117 (KDMKSRMIIV…EELNEILIKN (567 aa)). The Toprim domain occupies 555 to 712 (SRMIIVESPT…NVQRIEMHEI (158 aa)). Glu-561 is a Mg(2+) binding site. Residues 631-658 (IKRCSSCGAQFTDELPRCPYCNSDKIDD) form an RG C-terminal-type zinc finger. Zn(2+)-binding residues include Cys-634, Cys-637, Cys-648, and Cys-651. Residue Asp-681 participates in Mg(2+) binding. Residues 728-1114 (DVNLVKSQIV…NLYEELNEIL (387 aa)) form the Topo IA-type catalytic domain. Tyr-864 functions as the O-(5'-phospho-DNA)-tyrosine intermediate in the catalytic mechanism.

It in the N-terminal section; belongs to the DEAD box helicase family. DDVD subfamily. The protein in the C-terminal section; belongs to the type IA topoisomerase family. Monomer. Zn(2+) serves as cofactor. It depends on Mg(2+) as a cofactor.

The protein localises to the cytoplasm. It catalyses the reaction ATP + H2O = ADP + phosphate + H(+). Functionally, modifies the topological state of DNA by introducing positive supercoils in an ATP-dependent process, increasing the linking number in steps of +1; also positively supercoils with dATP and ATP-gamma-S. With UTP or dTTP relaxes negatively supercoiled DNA, in the absence of any nucleotide partially relaxes negative supercoils. In the absence of nucleotide has a higher affinity for dsDNA with a single-stranded tail than dsDNA or ssDNA. Has an ATPase activity in the absence of DNA. Binds to single-stranded DNA, transiently cleaves and then rejoins the ends, introducing a positive supercoil in the process. The scissile phosphodiester is attacked by the catalytic tyrosine of the enzyme, resulting in the formation of a DNA-(5'-phosphotyrosyl)-enzyme intermediate. Probably involved in rewinding DNA strands in regions of the chromosome that have opened up to allow replication, transcription, DNA repair and/or for DNA protection. This Caldanaerobacter subterraneus subsp. tengcongensis (strain DSM 15242 / JCM 11007 / NBRC 100824 / MB4) (Thermoanaerobacter tengcongensis) protein is Reverse gyrase.